The chain runs to 259 residues: Enkurin (259 aa).

Disordered regions lie at residues 1-26 and 76-98; these read MVAM…EPPQ and PPKK…TDHP. Residues 76 to 88 show a composition bias toward basic and acidic residues; sequence PPKKKFEWNERRK. The SH3-binding motif lies at 86-92; that stretch reads RRKPPVP. The Enkurin domain occupies 163 to 255; that stretch reads KRNEEVKKAQ…VLEKHKVIYI (93 aa). Residues 163-258 form an interaction with TRPC proteins region; that stretch reads KRNEEVKKAQ…KHKVIYIANK (96 aa). One can recognise an IQ domain in the interval 179 to 190; it reads IQENLRKAAMKR.

In terms of assembly, microtubule inner protein component of sperm flagellar doublet microtubules. Binds calmodulin via its IQ domain. Interacts with TRPC1, TRPC2, TRPC5, but not TRPC3. Interacts with CFAP45. In terms of tissue distribution, expressed in trachea multiciliated cells.

Its subcellular location is the cytoplasm. It is found in the cytoskeleton. The protein localises to the flagellum axoneme. It localises to the cilium axoneme. Adapter that functions to localize a calcium-sensitive signal transduction machinery in sperm to a calcium-permeable ion channel. Microtubule inner protein (MIP) part of the dynein-decorated doublet microtubules (DMTs) in cilia axoneme, which is required for motile cilia beating. This chain is Enkurin (ENKUR), found in Bos taurus (Bovine).